The primary structure comprises 570 residues: Adenine deaminase (570 aa).

This sequence belongs to the metallo-dependent hydrolases superfamily. Adenine deaminase family. Requires Mn(2+) as cofactor.

The catalysed reaction is adenine + H2O + H(+) = hypoxanthine + NH4(+). The sequence is that of Adenine deaminase from Clostridium acetobutylicum (strain ATCC 824 / DSM 792 / JCM 1419 / IAM 19013 / LMG 5710 / NBRC 13948 / NRRL B-527 / VKM B-1787 / 2291 / W).